We begin with the raw amino-acid sequence, 297 residues long: tRNA pseudouridine synthase B (297 aa).

The active-site Nucleophile is the aspartate 39.

This sequence belongs to the pseudouridine synthase TruB family. Type 1 subfamily.

The enzyme catalyses uridine(55) in tRNA = pseudouridine(55) in tRNA. Responsible for synthesis of pseudouridine from uracil-55 in the psi GC loop of transfer RNAs. This chain is tRNA pseudouridine synthase B, found in Lactobacillus gasseri (strain ATCC 33323 / DSM 20243 / BCRC 14619 / CIP 102991 / JCM 1131 / KCTC 3163 / NCIMB 11718 / NCTC 13722 / AM63).